The chain runs to 165 residues: Growth arrest and DNA damage-inducible protein GADD45 alpha (165 aa).

Position 2 is a phosphothreonine (Thr2).

This sequence belongs to the GADD45 family. As to quaternary structure, interacts with AURKA, PCNA, GADD45GIP1 and MAPK14.

It is found in the nucleus. Might affect PCNA interaction with some CDK (cell division protein kinase) complexes; stimulates DNA excision repair in vitro and inhibits entry of cells into S phase. In T-cells, functions as a regulator of p38 MAPKs by inhibiting p88 phosphorylation and activity. This chain is Growth arrest and DNA damage-inducible protein GADD45 alpha (GADD45A), found in Felis catus (Cat).